The primary structure comprises 438 residues: L-cysteine:1D-myo-inositol 2-amino-2-deoxy-alpha-D-glucopyranoside ligase (438 aa).

Residues 1-27 are disordered; sequence MDSWTSPDVPALPFTAEGPRVHDTARG. Cysteine 45 contributes to the Zn(2+) binding site. L-cysteinyl-5'-AMP contacts are provided by residues 45 to 48, threonine 60, and 83 to 85; these read CGIT and NVT. Positions 47 to 57 match the 'HIGH' region motif; it reads ITPYDATHLGH. A 'ERGGDP' region motif is present at residues 197–202; it reads DRGGDP. Tryptophan 238 contributes to the L-cysteinyl-5'-AMP binding site. Position 242 (cysteine 242) interacts with Zn(2+). 260–262 lines the L-cysteinyl-5'-AMP pocket; the sequence is GDD. Histidine 267 provides a ligand contact to Zn(2+). An L-cysteinyl-5'-AMP-binding site is contributed by valine 293. The 'KMSKS' region signature appears at 299–303; it reads KMSKS.

This sequence belongs to the class-I aminoacyl-tRNA synthetase family. MshC subfamily. Monomer. Requires Zn(2+) as cofactor.

The catalysed reaction is 1D-myo-inositol 2-amino-2-deoxy-alpha-D-glucopyranoside + L-cysteine + ATP = 1D-myo-inositol 2-(L-cysteinylamino)-2-deoxy-alpha-D-glucopyranoside + AMP + diphosphate + H(+). Catalyzes the ATP-dependent condensation of GlcN-Ins and L-cysteine to form L-Cys-GlcN-Ins. The sequence is that of L-cysteine:1D-myo-inositol 2-amino-2-deoxy-alpha-D-glucopyranoside ligase from Kytococcus sedentarius (strain ATCC 14392 / DSM 20547 / JCM 11482 / CCUG 33030 / NBRC 15357 / NCTC 11040 / CCM 314 / 541) (Micrococcus sedentarius).